A 346-amino-acid polypeptide reads, in one-letter code: Membrane progestin receptor alpha (346 aa).

The Cytoplasmic segment spans residues 1–72 (MAMAQKLSHL…RTLFQQHNEA (72 aa)). The chain crosses the membrane as a helical span at residues 73–93 (VNVWTHLLAALVLLLRLALFV). The Extracellular segment spans residues 94-103 (ETVDFWGDPH). The helical transmembrane segment at 104–124 (ALPLFIIVLASFTYLSFSALA) threads the bilayer. Residues 125–137 (HLLQAKSEFWHYS) lie on the Cytoplasmic side of the membrane. A helical membrane pass occupies residues 138–158 (FFFLDYVGVAVYQFGSALAHF). Residues 159-169 (YYAIEPAWHAQ) lie on the Extracellular side of the membrane. A helical membrane pass occupies residues 170-190 (VQAVFLPMAAFLAWLSCIGSC). Topologically, residues 191 to 237 (YNKYIQKPGLLGRTCQEVPSVLAYALDISPVVHRIFVSSDPTTDDPA) are cytoplasmic. The helical transmembrane segment at 238–258 (LLYHKCQVVFFLLAAAFFSTF) threads the bilayer. The Extracellular segment spans residues 259–276 (MPERWFPGSCHVFGQGHQ). The chain crosses the membrane as a helical span at residues 277-297 (LFHIFLVLCTLAQLEAVALDY). Over 298–316 (EARRPIYEPLHTHWPHNFS) the chain is Cytoplasmic. Residues 317–337 (GLFLLTVGSSILTAFLLSQLV) traverse the membrane as a helical segment. At 338–346 (QRKLDQKTK) the chain is on the extracellular side.

This sequence belongs to the ADIPOR family. In terms of tissue distribution, expressed in a wide range of tissues including ovary, testis, placenta, uterus and bladder.

The protein resides in the cell membrane. Functionally, plasma membrane progesterone (P4) receptor coupled to G proteins. Seems to act through a G(i) mediated pathway. May be involved in oocyte maturation. Involved in neurosteroid inhibition of apoptosis. Also binds dehydroepiandrosterone (DHEA), pregnanolone, pregnenolone and allopregnanolone. The chain is Membrane progestin receptor alpha from Homo sapiens (Human).